Here is a 407-residue protein sequence, read N- to C-terminus: Putative two-component response regulator ARR19 (407 aa).

Residues 35–150 (NVLVVDTNFT…VMANIWQHIV (116 aa)) enclose the Response regulatory domain. D86 is modified (4-aspartylphosphate). The Nuclear localization signal signature appears at 214-217 (RKPR). The segment at residues 217-271 (RMTWTEELHQKFLEAIEIIGGIEKANPKVLVECLQEMRIEGITRSNVASHLQKHR) is a DNA-binding region (myb-like GARP).

It belongs to the ARR family. Type-B subfamily. As to quaternary structure, binds the target DNA as a monomer. Post-translationally, two-component system major event consists of a His-to-Asp phosphorelay between a sensor histidine kinase (HK) and a response regulator (RR). In plants, the His-to-Asp phosphorelay involves an additional intermediate named Histidine-containing phosphotransfer protein (HPt). This multistep phosphorelay consists of a His-Asp-His-Asp sequential transfer of a phosphate group between first a His and an Asp of the HK protein, followed by the transfer to a conserved His of the HPt protein and finally the transfer to an Asp in the receiver domain of the RR protein. Detected in trichomes and siliques.

It localises to the nucleus. Its function is as follows. Putative transcriptional activator that binds specifically to the DNA sequence 5'-[AG]GATT-3'. Functions as a response regulator involved in His-to-Asp phosphorelay signal transduction system. Phosphorylation of the Asp residue in the receiver domain activates the ability of the protein to promote the transcription of target genes. Could directly activate some type-A response regulators in response to cytokinins. The polypeptide is Putative two-component response regulator ARR19 (ARR19) (Arabidopsis thaliana (Mouse-ear cress)).